Here is a 102-residue protein sequence, read N- to C-terminus: Iron-sulfur cluster assembly protein CyaY (102 aa).

The protein belongs to the frataxin family.

Functionally, involved in iron-sulfur (Fe-S) cluster assembly. May act as a regulator of Fe-S biogenesis. The polypeptide is Iron-sulfur cluster assembly protein CyaY (Pasteurella multocida (strain Pm70)).